A 226-amino-acid polypeptide reads, in one-letter code: X-linked lymphocyte-regulated protein 3A (226 aa).

A compositionally biased stretch (basic and acidic residues) spans 1-18 (MSSRERKATDTAGRHSRM). The disordered stretch occupies residues 1-72 (MSSRERKATD…QDLVQEFEEP (72 aa)). Residues 21–30 (NLSSDDSQNP) are compositionally biased toward polar residues. Composition is skewed to basic and acidic residues over residues 39–48 (EVLDAGREDI) and 56–65 (QQARKEKQDL). Positions 155–210 (ETLTLQKNRMEEFKSLCEKYLEKLEVLRDSRGNSIAEELRRLIATLEIKLLMLHNQ) form a coiled coil.

This sequence belongs to the XLR/SYCP3 family. In terms of tissue distribution, expressed in lymphoid cells.

This is X-linked lymphocyte-regulated protein 3A (Xlr3a) from Mus musculus (Mouse).